The sequence spans 191 residues: Glycerol-3-phosphate acyltransferase (191 aa).

5 consecutive transmembrane segments (helical) span residues 10–30, 57–77, 84–104, 118–138, and 158–178; these read LAFI…CISA, FGSV…FLAV, FAST…YMAF, FVLV…FFVL, and YALL…LIFI.

Belongs to the PlsY family. As to quaternary structure, probably interacts with PlsX.

It localises to the cell inner membrane. It carries out the reaction an acyl phosphate + sn-glycerol 3-phosphate = a 1-acyl-sn-glycero-3-phosphate + phosphate. It participates in lipid metabolism; phospholipid metabolism. Catalyzes the transfer of an acyl group from acyl-phosphate (acyl-PO(4)) to glycerol-3-phosphate (G3P) to form lysophosphatidic acid (LPA). This enzyme utilizes acyl-phosphate as fatty acyl donor, but not acyl-CoA or acyl-ACP. The polypeptide is Glycerol-3-phosphate acyltransferase (Neorickettsia sennetsu (strain ATCC VR-367 / Miyayama) (Ehrlichia sennetsu)).